The following is a 249-amino-acid chain: uncharacterized protein (249 aa).

11 to 34 (IFGGRSQIGGELARRLAAGATMVL) lines the NADP(+) pocket. Position 142 (serine 142) interacts with substrate. Tyrosine 155 (proton acceptor) is an active-site residue.

It belongs to the short-chain dehydrogenases/reductases (SDR) family.

This is an uncharacterized protein from Mycobacterium tuberculosis (strain CDC 1551 / Oshkosh).